Consider the following 134-residue polypeptide: MEIKKLYECTVIINGGLEDDAIAATMDEVRNVIAKNGGDIENVLEVGRRTMAYPIGKQTIGSYAHIEFRGEPSGLAAIETAFRYNENILRFLIVHLSTPLLEMRKRVEKYSVVIGSPEDQSEEDQQEESVAAKK.

It belongs to the bacterial ribosomal protein bS6 family.

Its function is as follows. Binds together with bS18 to 16S ribosomal RNA. This Chlorobium phaeobacteroides (strain BS1) protein is Small ribosomal subunit protein bS6.